The primary structure comprises 281 residues: Kinetochore-associated protein NSL1 homolog (281 aa).

S4 bears the Phosphoserine mark. T244 is subject to Phosphothreonine.

In terms of assembly, component of the MIS12 complex composed of MIS12, DSN1, NSL1/DC8 and PMF1. Interacts with KNL1.

It localises to the nucleus. Its subcellular location is the chromosome. It is found in the centromere. The protein localises to the kinetochore. Functionally, part of the MIS12 complex which is required for normal chromosome alignment and segregation and kinetochore formation during mitosis. The chain is Kinetochore-associated protein NSL1 homolog (NSL1) from Homo sapiens (Human).